Consider the following 308-residue polypeptide: Ribosomal RNA small subunit methyltransferase H (308 aa).

S-adenosyl-L-methionine-binding positions include 38–40, Asp58, Phe82, Asp99, and Gln106; that span reads GGH.

It belongs to the methyltransferase superfamily. RsmH family.

The protein resides in the cytoplasm. The catalysed reaction is cytidine(1402) in 16S rRNA + S-adenosyl-L-methionine = N(4)-methylcytidine(1402) in 16S rRNA + S-adenosyl-L-homocysteine + H(+). In terms of biological role, specifically methylates the N4 position of cytidine in position 1402 (C1402) of 16S rRNA. This is Ribosomal RNA small subunit methyltransferase H from Acidovorax sp. (strain JS42).